Here is a 203-residue protein sequence, read N- to C-terminus: Holliday junction branch migration complex subunit RuvA (203 aa).

The tract at residues 1–62 is domain I; the sequence is MYEYFLGQVT…ENGMSLFGFF (62 aa). The domain II stretch occupies residues 63–141; that stretch reads DADEKALFEK…DLNVDVTGQT (79 aa). A flexible linker region spans residues 142–148; the sequence is ALDVDAP. The interval 149–203 is domain III; that stretch reads AVDGALADALAALEALGYSKADVKKVTKKLETFSQTQGADTNTLLSEGLRLLMKK.

The protein belongs to the RuvA family. Homotetramer. Forms an RuvA(8)-RuvB(12)-Holliday junction (HJ) complex. HJ DNA is sandwiched between 2 RuvA tetramers; dsDNA enters through RuvA and exits via RuvB. An RuvB hexamer assembles on each DNA strand where it exits the tetramer. Each RuvB hexamer is contacted by two RuvA subunits (via domain III) on 2 adjacent RuvB subunits; this complex drives branch migration. In the full resolvosome a probable DNA-RuvA(4)-RuvB(12)-RuvC(2) complex forms which resolves the HJ.

The protein localises to the cytoplasm. Functionally, the RuvA-RuvB-RuvC complex processes Holliday junction (HJ) DNA during genetic recombination and DNA repair, while the RuvA-RuvB complex plays an important role in the rescue of blocked DNA replication forks via replication fork reversal (RFR). RuvA specifically binds to HJ cruciform DNA, conferring on it an open structure. The RuvB hexamer acts as an ATP-dependent pump, pulling dsDNA into and through the RuvAB complex. HJ branch migration allows RuvC to scan DNA until it finds its consensus sequence, where it cleaves and resolves the cruciform DNA. The protein is Holliday junction branch migration complex subunit RuvA of Lactiplantibacillus plantarum (strain ATCC BAA-793 / NCIMB 8826 / WCFS1) (Lactobacillus plantarum).